The chain runs to 210 residues: ATP phosphoribosyltransferase (210 aa).

This sequence belongs to the ATP phosphoribosyltransferase family. Short subfamily. As to quaternary structure, heteromultimer composed of HisG and HisZ subunits.

The protein localises to the cytoplasm. It catalyses the reaction 1-(5-phospho-beta-D-ribosyl)-ATP + diphosphate = 5-phospho-alpha-D-ribose 1-diphosphate + ATP. Its pathway is amino-acid biosynthesis; L-histidine biosynthesis; L-histidine from 5-phospho-alpha-D-ribose 1-diphosphate: step 1/9. Functionally, catalyzes the condensation of ATP and 5-phosphoribose 1-diphosphate to form N'-(5'-phosphoribosyl)-ATP (PR-ATP). Has a crucial role in the pathway because the rate of histidine biosynthesis seems to be controlled primarily by regulation of HisG enzymatic activity. The sequence is that of ATP phosphoribosyltransferase (hisG) from Synechocystis sp. (strain ATCC 27184 / PCC 6803 / Kazusa).